We begin with the raw amino-acid sequence, 465 residues long: Iron-sulfur cluster assembly SufBD family protein SSP1857 (465 aa).

It belongs to the iron-sulfur cluster assembly SufBD family.

The protein is Iron-sulfur cluster assembly SufBD family protein SSP1857 of Staphylococcus saprophyticus subsp. saprophyticus (strain ATCC 15305 / DSM 20229 / NCIMB 8711 / NCTC 7292 / S-41).